The primary structure comprises 1494 residues: MDVLELLRVSGSNMYYSTFLADAWCYYISNQITMTMYLYCALGVLSMLFIGWFVYFKRLARLRLRHEIARSLSAVTMASGGDLRGPRFRKRDKMLFYGRRMLRKMKNVSGQMYSSGKGYKRRAVIRFARRILQLRRENMPLEVRTVEPPAEYLEETMEGSDRVPPDALYMLQSIRIFGHFEKPIFLRLCKHTQLLELMGGDYLFKITDPDDSVYIVQSGMINVYISNADGSTLSLKTVRKGESVTSLLSFIDVLSGNPSYYKTVTAKAIEKSVVIRLPMAAFQEVFKDSPDVMIRVIQVIMIRLQRVLFTALRNYLGLNAELVQNHMRFKGSSQGAGPSVYCSQTTRQATGSASATASAAAASGTAGSTHTAVPRPASSLSRYSQDEQHTLSDPNPGIPNLELSGDSVNTLFGEVNGGARLNSYPPLYHQRESDGNLSTRRGSITQQEQPEVGPVPSIDMRLVKSSAVDSLRKELGLPEQDAHIIDPFVEVREMEPNVTLITEGNADDVCVWFVMTGTLAVYQGNADATRIKQDKTDLLIHYVHPGEIVGGLAMLTGEASAYTIRSRNHSRVAFIRRAAIYQIMRQRPRIVLDLGNGVVRRLSPLVRQCDYALDWIFLESGRALYRQDESSDSTYIVLSGRMRSVITHPGGKKEIVGEYGKGDLVGIVEMITETSRTTTVMAVRDSELAKLPEGLFNAIKLRYPIVVTKLISFLSHRFLGSMQTRTTTGAPGAPVEANPVTHKYSTVALVPITDDVPLTPFTYELYHSLCAIGPVLRLTSDLARKQLGMNIFDASNEYRLTSWLAQQEDRNIITLYQCDNALSPWTQRCMRQADVVLIVGLGDHSHLVGKFEREIDRLALRTQKELVLLYPETASSKPANTLSWLNARPWVTKHHHVLCVKRIFTRKSQYRINDLYSRVLLSEPNMHSDFSRLARWLTGNSIGLVLGGGGARGAAHIGMLKAIQEAGIPIDMVGGVSIGALMGALWCSERNITTVTQKAREWSKKMTKWFLQLLDLTYPITSMFSGREFNKTIHETFGDVNIEDLWIPYFTLTTDITASCHRIHTNGSLWRYVRSSMSLSGYMPPLCDPKDGHLLLDGGYVNNLPGHLWRYCRASMSIAGVFPPFCDYRDGHLLLDGCYTNNVPADVMHNLGAAHIIAIDVGSQDDTDLTNYGDDLSGWWLLYKKWNPFTAPVKVPDLPDIQSRLAYVSCVRQLEEVKNSDYCEYIRPPIDKYKTLAFGSFDEIRDVGYVFGKNYFEGMAKAGRLGRFNQWFSKEPPKRGNHASLNEYTFIDLAQIVCRLPETYGLNPSDLFSEDEDCDGYISEPTTLNTDVRRYQVPRGGNSLSLSETEMDMDSDVEMDLKMERKMDKATQSTPPLQSKAQILRRKHSKEEARHEWEIKREQKQELAREQELERERELSQKGTTAGATGYTPNAVIATQTSLIFMDEEDEMDKKKTKDNDRDEVRGSAEDKGKEKEEDKENRSNTNNETKNYL.

Topologically, residues 1 to 35 are lumenal; the sequence is MDVLELLRVSGSNMYYSTFLADAWCYYISNQITMT. A helical transmembrane segment spans residues 36–56; that stretch reads MYLYCALGVLSMLFIGWFVYF. Residues 57-1494 lie on the Cytoplasmic side of the membrane; sequence KRLARLRLRH…NTNNETKNYL (1438 aa). Residue 176-303 participates in a nucleoside 3',5'-cyclic phosphate binding; it reads IFGHFEKPIF…IRVIQVIMIR (128 aa). The segment covering 362–372 has biased composition (low complexity); that stretch reads ASGTAGSTHTA. Disordered stretches follow at residues 362 to 405 and 422 to 452; these read ASGT…ELSG and NSYP…QPEV. Over residues 435–449 the composition is skewed to polar residues; the sequence is GNLSTRRGSITQQEQ. S443 bears the Phosphoserine mark. Residues 474–601 and 590–717 each bind a nucleoside 3',5'-cyclic phosphate; these read ELGL…VVRR and IVLD…LSHR. The region spanning 944–1110 is the PNPLA domain; the sequence is LVLGGGGARG…VNNLPGHLWR (167 aa). Positions 948–953 match the GXGXXG motif; it reads GGGARG. The GXSXG signature appears at 975–979; the sequence is GVSIG. Residue S977 is the Nucleophile of the active site. The active-site Proton acceptor is the D1097. A DGA/G motif is present at residues 1097 to 1099; it reads DGG. Residues 1367–1494 are disordered; the sequence is MDKATQSTPP…NTNNETKNYL (128 aa). Polar residues predominate over residues 1370–1381; the sequence is ATQSTPPLQSKA. Basic and acidic residues-rich tracts occupy residues 1389–1420 and 1452–1483; these read SKEE…RELS and MDKK…KENR. Residues 1484-1494 show a composition bias toward polar residues; that stretch reads SNTNNETKNYL.

The protein belongs to the NTE family. Interacts with Pka-C3; interaction inhibits the catalytic function of Pka-C3 and the esterase activity of sws.

It localises to the endoplasmic reticulum membrane. It catalyses the reaction a 1-acyl-sn-glycero-3-phosphocholine + H2O = sn-glycerol 3-phosphocholine + a fatty acid + H(+). In terms of biological role, phospholipase B that deacylates intracellular phosphatidylcholine (PtdCho), generating glycerophosphocholine (GroPtdCho). This deacylation occurs at both sn-2 and sn-1 positions of PtdCho. Its specific chemical modification by certain organophosphorus (OP) compounds leads to distal axonopathy. Plays a role in the signaling mechanism between neurons and glia that regulates glia wrapping during development of the adult brain. Essential for membrane lipid homeostasis and cell survival in both neurons and glia of the adult brain. This Drosophila pseudoobscura pseudoobscura (Fruit fly) protein is Neuropathy target esterase sws.